The primary structure comprises 233 residues: Pilin-like protein PilA3 (233 aa).

Positions 1–4 are cleaved as a propeptide — leader sequence; it reads MKRG. Phenylalanine 5 is modified (N-methylphenylalanine). A helical transmembrane segment spans residues 5–25; it reads FTLVEVLVAMAILVVVLAVGV. The segment at 121 to 143 is disordered; sequence LRRSDVNATPSSGSDCTTPPPNS. Residues 126–137 are compositionally biased toward polar residues; the sequence is VNATPSSGSDCT.

It localises to the cell inner membrane. It is found in the cell outer membrane. Its subcellular location is the periplasm. Functionally, plays an essential role in natural DNA transformation but is not required for pilus biogenesis. The protein is Pilin-like protein PilA3 (pilA3) of Thermus thermophilus (strain ATCC BAA-163 / DSM 7039 / HB27).